Consider the following 339-residue polypeptide: Transcription initiation factor IIB (339 aa).

The TFIIB-type zinc-finger motif lies at 39-70 (EELICPVCGSKSIIKDYERAEIVCEMCGCVLQ). Residues cysteine 43, cysteine 46, cysteine 62, and cysteine 65 each contribute to the Zn(2+) site. 2 repeat units span residues 156-239 (SELD…SREL) and 250-331 (DYVP…ELTE).

Belongs to the TFIIB family.

In terms of biological role, stabilizes TBP binding to an archaeal box-A promoter. Also responsible for recruiting RNA polymerase II to the pre-initiation complex (DNA-TBP-TFIIB). The chain is Transcription initiation factor IIB from Methanococcus maripaludis (strain C5 / ATCC BAA-1333).